A 238-amino-acid polypeptide reads, in one-letter code: Ribosomal RNA small subunit methyltransferase G (238 aa).

S-adenosyl-L-methionine-binding positions include glycine 77, phenylalanine 82, 128–129 (AE), and arginine 147.

This sequence belongs to the methyltransferase superfamily. RNA methyltransferase RsmG family.

It is found in the cytoplasm. Specifically methylates the N7 position of guanine in position 535 of 16S rRNA. The protein is Ribosomal RNA small subunit methyltransferase G of Listeria innocua serovar 6a (strain ATCC BAA-680 / CLIP 11262).